The sequence spans 457 residues: Multidrug resistance protein MdtK (457 aa).

The next 12 membrane-spanning stretches (helical) occupy residues 11–31, 53–73, 93–113, 127–147, 160–180, 189–209, 243–263, 276–296, 314–334, 357–377, 387–407, and 418–438; these read LLAL…MGFV, IWLP…PVIA, WLAG…GYII, AVGY…FQVA, GMVM…IFIY, GGVG…FSMI, LPIA…ALLV, IALN…AAVT, AART…LFTV, LMLL…GSGI, IFFI…YILA, and PAGF…LMML.

This sequence belongs to the multi antimicrobial extrusion (MATE) (TC 2.A.66.1) family. MdtK subfamily.

The protein resides in the cell inner membrane. Functionally, multidrug efflux pump that functions probably as a Na(+)/drug antiporter. This Enterobacter sp. (strain 638) protein is Multidrug resistance protein MdtK.